Consider the following 158-residue polypeptide: Snaclec jerdonuxin subunit alpha (158 aa).

The N-terminal stretch at 1–23 is a signal peptide; it reads MGRFTFVSFGLLVVFLSLSGTGA. Disulfide bonds link Cys27–Cys38, Cys55–Cys152, and Cys127–Cys144. The region spanning 34-153 is the C-type lectin domain; sequence YDRYCYQAFS…CGTENPFVCK (120 aa).

This sequence belongs to the snaclec family. In terms of assembly, tetramer of 4 heterodimers of alpha and beta subunits; disulfide-linked. Expressed by the venom gland.

Its subcellular location is the secreted. Functionally, snaclec that strongly induces platelet aggregation, in a dose-dependent manner. This Protobothrops jerdonii (Jerdon's pitviper) protein is Snaclec jerdonuxin subunit alpha.